A 321-amino-acid chain; its full sequence is Porin Omp2a (321 aa).

The first 22 residues, 1–22, serve as a signal peptide directing secretion; it reads MNIKSLLLGSAAALVAASGAQA.

This sequence belongs to the alphaproteobacteria porin family. As to quaternary structure, monomer.

It localises to the cell outer membrane. Forms passive diffusion pores that allow small molecular weight hydrophilic materials across the outer membrane. This Brucella abortus (strain S19) protein is Porin Omp2a (omp2a).